The chain runs to 1483 residues: Chromosome partition protein MukB (1483 aa).

G34–S41 serves as a coordination point for ATP. Coiled coils occupy residues L326–Q418, L444–Q480, R509–A601, R780–L804, E837–E923, E977–A1115, and V1209–V1265. Residues P666–C783 are flexible hinge.

Belongs to the SMC family. MukB subfamily. In terms of assembly, homodimerization via its hinge domain. Binds to DNA via its C-terminal region. Interacts, and probably forms a ternary complex, with MukE and MukF via its C-terminal region. The complex formation is stimulated by calcium or magnesium. Interacts with tubulin-related protein FtsZ.

It localises to the cytoplasm. Its subcellular location is the nucleoid. In terms of biological role, plays a central role in chromosome condensation, segregation and cell cycle progression. Functions as a homodimer, which is essential for chromosome partition. Involved in negative DNA supercoiling in vivo, and by this means organize and compact chromosomes. May achieve or facilitate chromosome segregation by condensation DNA from both sides of a centrally located replisome during cell division. This is Chromosome partition protein MukB from Shigella dysenteriae serotype 1 (strain Sd197).